A 323-amino-acid polypeptide reads, in one-letter code: RNA polymerase sigma factor SigB (323 aa).

Residues 1 to 228 (MADAPTRATT…DMPVGSEEEA (228 aa)) are sufficient to interact with RbpA. The tract at residues 25–59 (DLVRVYLNGIGKTALLNAAGEVELAKRIEAGLYAE) is sigma-70 factor domain-1. The interval 90–160 (LLEANLRLVV…TRGMADQSRT (71 aa)) is sigma-70 factor domain-2. A Polymerase core binding motif is present at residues 114-117 (DLIQ). Positions 169–245 (EQVNKLARIK…DAEAMSAENA (77 aa)) are sigma-70 factor domain-3. The segment at 258–311 (VLATLDEREHQVIRLRFGLDDGQPRTLDQIGKLFGLSRERVRQIERDVMSKLRH) is sigma-70 factor domain-4. A DNA-binding region (H-T-H motif) is located at residues 284-303 (LDQIGKLFGLSRERVRQIER).

It belongs to the sigma-70 factor family. In terms of assembly, monomer. Interacts transiently with the RNA polymerase catalytic core formed by RpoA, RpoB, RpoC and RpoZ (2 alpha, 1 beta, 1 beta' and 1 omega subunit) to form the RNA polymerase holoenzyme that can initiate transcription.

Sigma factors are initiation factors that promote the attachment of RNA polymerase to specific initiation sites and are then released. A non-essential principal sigma factor that responds to cell envelope stress and hypoxia. The sequence is that of RNA polymerase sigma factor SigB (sigB) from Mycobacterium tuberculosis (strain CDC 1551 / Oshkosh).